The sequence spans 61 residues: Photosystem II reaction center protein K (61 aa).

The propeptide occupies 1–24 (MPNILSLTCICFNSVLCPTSFFFA). The helical transmembrane segment at 32–52 (IFNPIVDVMPVIPVLFFLLAF) threads the bilayer.

It belongs to the PsbK family. In terms of assembly, PSII is composed of 1 copy each of membrane proteins PsbA, PsbB, PsbC, PsbD, PsbE, PsbF, PsbH, PsbI, PsbJ, PsbK, PsbL, PsbM, PsbT, PsbX, PsbY, PsbZ, Psb30/Ycf12, at least 3 peripheral proteins of the oxygen-evolving complex and a large number of cofactors. It forms dimeric complexes.

Its subcellular location is the plastid. It is found in the chloroplast thylakoid membrane. In terms of biological role, one of the components of the core complex of photosystem II (PSII). PSII is a light-driven water:plastoquinone oxidoreductase that uses light energy to abstract electrons from H(2)O, generating O(2) and a proton gradient subsequently used for ATP formation. It consists of a core antenna complex that captures photons, and an electron transfer chain that converts photonic excitation into a charge separation. The protein is Photosystem II reaction center protein K of Sorghum bicolor (Sorghum).